The primary structure comprises 491 residues: Sterol 14-alpha demethylase (491 aa).

A helical transmembrane segment spans residues 20–40; it reads LWMLSTVALLSILVVSVVINV. Residue C430 coordinates heme.

It belongs to the cytochrome P450 family. Requires heme as cofactor.

It is found in the endoplasmic reticulum membrane. It carries out the reaction a 14alpha-methyl steroid + 3 reduced [NADPH--hemoprotein reductase] + 3 O2 = a Delta(14) steroid + formate + 3 oxidized [NADPH--hemoprotein reductase] + 4 H2O + 4 H(+). It catalyses the reaction a 14alpha-methyl steroid + reduced [NADPH--hemoprotein reductase] + O2 = a 14alpha-hydroxymethyl steroid + oxidized [NADPH--hemoprotein reductase] + H2O + H(+). The enzyme catalyses a 14alpha-hydroxymethyl steroid + reduced [NADPH--hemoprotein reductase] + O2 = a 14alpha-formyl steroid + oxidized [NADPH--hemoprotein reductase] + 2 H2O + H(+). The catalysed reaction is a 14alpha-formyl steroid + reduced [NADPH--hemoprotein reductase] + O2 = a Delta(14) steroid + formate + oxidized [NADPH--hemoprotein reductase] + H2O + 2 H(+). It carries out the reaction lanosterol + 3 reduced [NADPH--hemoprotein reductase] + 3 O2 = 4,4-dimethyl-5alpha-cholesta-8,14,24-trien-3beta-ol + formate + 3 oxidized [NADPH--hemoprotein reductase] + 4 H2O + 4 H(+). It catalyses the reaction lanosterol + reduced [NADPH--hemoprotein reductase] + O2 = 32-hydroxylanosterol + oxidized [NADPH--hemoprotein reductase] + H2O + H(+). The enzyme catalyses 32-hydroxylanosterol + reduced [NADPH--hemoprotein reductase] + O2 = 32-oxolanosterol + oxidized [NADPH--hemoprotein reductase] + 2 H2O + H(+). The catalysed reaction is 32-oxolanosterol + reduced [NADPH--hemoprotein reductase] + O2 = 4,4-dimethyl-5alpha-cholesta-8,14,24-trien-3beta-ol + formate + oxidized [NADPH--hemoprotein reductase] + H2O + 2 H(+). It carries out the reaction eburicol + 3 reduced [NADPH--hemoprotein reductase] + 3 O2 = 14-demethyleburicol + formate + 3 oxidized [NADPH--hemoprotein reductase] + 4 H2O + 4 H(+). It catalyses the reaction eburicol + reduced [NADPH--hemoprotein reductase] + O2 = 32-hydroxyeburicol + oxidized [NADPH--hemoprotein reductase] + H2O + H(+). The enzyme catalyses 32-hydroxyeburicol + reduced [NADPH--hemoprotein reductase] + O2 = 32-oxoeburicol + oxidized [NADPH--hemoprotein reductase] + 2 H2O + H(+). The catalysed reaction is 32-oxoeburicol + reduced [NADPH--hemoprotein reductase] + O2 = 14-demethyleburicol + formate + oxidized [NADPH--hemoprotein reductase] + H2O + 2 H(+). It functions in the pathway steroid biosynthesis; sterol biosynthesis. Functionally, sterol 14alpha-demethylase, encoded by cyp51A, cyp51B and cyp51C, that plays a critical role in the third module of ergosterol biosynthesis pathway, being ergosterol the major sterol component in fungal membranes that participates in a variety of functions. The third module or late pathway involves the ergosterol synthesis itself through consecutive reactions that mainly occur in the endoplasmic reticulum (ER) membrane. In filamentous fungi, during the initial step of this module, lanosterol (lanosta-8,24-dien-3beta-ol) can be metabolized to eburicol. Sterol 14alpha-demethylase catalyzes the three-step oxidative removal of the 14alpha-methyl group (C-32) of both these sterols in the form of formate, and converts eburicol and lanosterol to 14-demethyleburicol (4,4,24-trimethylergosta-8,14,24(28)-trienol) and 4,4-dimethyl-5alpha-cholesta-8,14,24-trien-3beta-ol, respectively, which are further metabolized by other enzymes in the pathway to ergosterol. Can also use substrates not intrinsic to fungi, such as 24,25-dihydrolanosterol (DHL), producing 4,4'-dimethyl-8,14-cholestadien-3-beta-ol, but at lower rates than the endogenous substrates. Its function is as follows. As a target of azole drugs, plays a crucial role in azole susceptibility. In Aspergillus flavus (strain ATCC 200026 / FGSC A1120 / IAM 13836 / NRRL 3357 / JCM 12722 / SRRC 167), this protein is Sterol 14-alpha demethylase.